Here is a 289-residue protein sequence, read N- to C-terminus: tRNA pseudouridine synthase A (289 aa).

The active-site Nucleophile is Asp-67. Residue Tyr-125 participates in substrate binding.

It belongs to the tRNA pseudouridine synthase TruA family. As to quaternary structure, homodimer.

It catalyses the reaction uridine(38/39/40) in tRNA = pseudouridine(38/39/40) in tRNA. In terms of biological role, formation of pseudouridine at positions 38, 39 and 40 in the anticodon stem and loop of transfer RNAs. In Prochlorococcus marinus (strain MIT 9211), this protein is tRNA pseudouridine synthase A.